Reading from the N-terminus, the 39-residue chain is Photosystem II reaction center protein L (39 aa).

A helical transmembrane segment spans residues 18–38; it reads SLYLGLLLVFVTGVLFSSYFF.

The protein belongs to the PsbL family. In terms of assembly, PSII is composed of 1 copy each of membrane proteins PsbA, PsbB, PsbC, PsbD, PsbE, PsbF, PsbH, PsbI, PsbJ, PsbK, PsbL, PsbM, PsbT, PsbX, PsbY, PsbZ, Psb30/Ycf12, peripheral proteins PsbO, CyanoQ (PsbQ), PsbU, PsbV and a large number of cofactors. It forms dimeric complexes.

The protein localises to the cellular thylakoid membrane. In terms of biological role, one of the components of the core complex of photosystem II (PSII). PSII is a light-driven water:plastoquinone oxidoreductase that uses light energy to abstract electrons from H(2)O, generating O(2) and a proton gradient subsequently used for ATP formation. It consists of a core antenna complex that captures photons, and an electron transfer chain that converts photonic excitation into a charge separation. This subunit is found at the monomer-monomer interface and is required for correct PSII assembly and/or dimerization. In Synechococcus sp. (strain RCC307), this protein is Photosystem II reaction center protein L.